We begin with the raw amino-acid sequence, 449 residues long: Phosphoglucosamine mutase (449 aa).

The Phosphoserine intermediate role is filled by Ser-103. Residues Ser-103, Asp-240, Asp-242, and Asp-244 each coordinate Mg(2+). Ser-103 bears the Phosphoserine mark.

This sequence belongs to the phosphohexose mutase family. It depends on Mg(2+) as a cofactor. In terms of processing, activated by phosphorylation.

The enzyme catalyses alpha-D-glucosamine 1-phosphate = D-glucosamine 6-phosphate. Its function is as follows. Catalyzes the conversion of glucosamine-6-phosphate to glucosamine-1-phosphate. This chain is Phosphoglucosamine mutase, found in Thermobifida fusca (strain YX).